Reading from the N-terminus, the 524-residue chain is Acetyl-CoA hydrolase (524 aa).

279 to 283 serves as a coordination point for CoA; sequence GIGNI. Glu304 (5-glutamyl coenzyme A thioester intermediate) is an active-site residue. A CoA-binding site is contributed by Gly398.

The protein belongs to the acetyl-CoA hydrolase/transferase family.

It localises to the cytoplasm. The catalysed reaction is acetyl-CoA + H2O = acetate + CoA + H(+). Its function is as follows. Presumably involved in regulating the intracellular acetyl-CoA pool for fatty acid and cholesterol synthesis and fatty acid oxidation. This Yarrowia lipolytica (strain CLIB 122 / E 150) (Yeast) protein is Acetyl-CoA hydrolase (ACH1).